We begin with the raw amino-acid sequence, 257 residues long: Short chain dehydrogenase helC (257 aa).

A signal peptide spans 1–22; it reads MNTAIITGAAQGVGLCIAEALA. Val-13 contacts NADP(+). N-linked (GlcNAc...) asparagine glycosylation occurs at Asn-46. NADP(+) is bound by residues Asp-60 and Asn-87. Asn-110 is a glycosylation site (N-linked (GlcNAc...) asparagine). The NADP(+) site is built by Tyr-154, Lys-158, Ile-185, and Thr-187. The Proton acceptor role is filled by Tyr-154. The Lowers pKa of active site Tyr role is filled by Lys-158.

Belongs to the short-chain dehydrogenases/reductases (SDR) family.

It functions in the pathway mycotoxin biosynthesis. Short chain dehydrogenase; part of the gene cluster that mediates the biosynthesis of helvolic acid, an antibacterial nortriterpenoid. Protostadienol synthase helA cyclizes (3S)-oxidosqualene to (17Z)-protosta-17(20),24-dien-3-beta-ol (protostadienol). The synthesis of protostadienol is followed by several steps of monooxygenation, dehydrogenation, and acyl transfer to yield the final helvolic acid. Following the cyclization to the tetracyclic protostadienol by helA, cytochrome P450 monooxygenases helB1-mediated and helB2-mediated oxidation at C-4 and C-16, acyltransferase helD2-dependent acetylation of 16-OH, oxidation of C-21 by cytochrome P450 monooxygenase helB4, and short chain dehydrogenase helC-dependent oxidative decarboxylation yield the fusidane skeleton. This intermediate is further modified in three additional steps mediated by the cytochrome P450 monooxygenase helB3, the acyltransferase helD1, and the 3-ketosteroid 1-dehydrogenase helE to give helvolic acid. Compared with the late stages in the biosynthesis of helvolic acid, enzymes involved in the early stage modifications act in a relatively strict order. The hydroxylation of C-16 by helB1 and subsequent acetylation by helD2 should occur before the helB3-mediated oxidation of C-21. C-4 demethylation in fusidane-type antibiotics proceeds in an unusual manner though it is also achieved by oxidative decarboxylation. The methyl group at C-4 beta position is oxidized by helB1 and subsequently removed by the short chain dehydrogenase helC. The polypeptide is Short chain dehydrogenase helC (Aspergillus fumigatus (strain ATCC MYA-4609 / CBS 101355 / FGSC A1100 / Af293) (Neosartorya fumigata)).